Consider the following 275-residue polypeptide: Undecaprenyl-diphosphatase 2 (275 aa).

Helical transmembrane passes span 48-68 (NAYVFKIVIQLGSILAVALLF), 90-110 (GLTLGKVAVGLLPAAVLGLLF), 117-137 (IFHVRTVAFALIAGAFLMIAA), 154-174 (ISYKQALAIGLFQCLALWPGF), 195-215 (ANFTFIMAIPIMVGASALSLI), 223-243 (ISLLPFYATGFISAFLVSLVV), and 254-274 (IKLVPFALYRIALGLLLLFLF).

It belongs to the UppP family.

It is found in the cell membrane. It carries out the reaction di-trans,octa-cis-undecaprenyl diphosphate + H2O = di-trans,octa-cis-undecaprenyl phosphate + phosphate + H(+). Its function is as follows. Catalyzes the dephosphorylation of undecaprenyl diphosphate (UPP). Confers resistance to bacitracin. The protein is Undecaprenyl-diphosphatase 2 of Shouchella clausii (strain KSM-K16) (Alkalihalobacillus clausii).